An 88-amino-acid polypeptide reads, in one-letter code: Electron transfer flavoprotein regulatory factor 1 (88 aa).

The protein belongs to the complex I LYR family. In terms of assembly, homotetramer. Interacts with NDUFAB1. Interacts with ETFA. Interacts with ETFB.

It localises to the mitochondrion. In terms of biological role, acts as a regulator of the electron transfer flavoprotein by promoting the removal of flavin from the ETF holoenzyme (composed of ETFA and ETFB). The chain is Electron transfer flavoprotein regulatory factor 1 from Bos taurus (Bovine).